We begin with the raw amino-acid sequence, 315 residues long: MSESSYKTSHTAIRKARRFAMQGLYEWLVTDRRFDIDGKLGWKANAPHDIAARTRATNAMHTVHIGYYHEMMRDIPEQIDALDALISQHLDREINKLDTVEHAILLVGAYELQNRLEIPYKVVLDEAMKLNNHFGATDAHKLINAVLDRMAVELRAPEVDADSKANLRTSQKAAAKPVTKADKKTDINANNSDIEEKPIASNKPRISANNASVKRNSVSKALANITDYKASKQNDTQNTVEEIIIKPTSIETVIVDKVDEIAVSAENIANDQPVEENIAASNDKVTAEVELLDSNSANFDTKSAELNDADEKSQD.

Residues 296–315 form a disordered region; sequence SANFDTKSAELNDADEKSQD. The span at 302-315 shows a compositional bias: basic and acidic residues; it reads KSAELNDADEKSQD.

This sequence belongs to the NusB family.

Its function is as follows. Involved in transcription antitermination. Required for transcription of ribosomal RNA (rRNA) genes. Binds specifically to the boxA antiterminator sequence of the ribosomal RNA (rrn) operons. The protein is Transcription antitermination protein NusB of Psychrobacter cryohalolentis (strain ATCC BAA-1226 / DSM 17306 / VKM B-2378 / K5).